Here is a 391-residue protein sequence, read N- to C-terminus: Succinate--CoA ligase [ADP-forming] subunit beta (391 aa).

Residues 9–247 (KDILAKYGVA…IAEEDPLEVE (239 aa)) form the ATP-grasp domain. ATP contacts are provided by residues lysine 49, 56–58 (GRG), glutamate 102, alanine 105, and glutamate 110. The Mg(2+) site is built by asparagine 202 and aspartate 216. Residues asparagine 267 and 324-326 (GIL) contribute to the substrate site.

Belongs to the succinate/malate CoA ligase beta subunit family. Heterotetramer of two alpha and two beta subunits. Mg(2+) is required as a cofactor.

It catalyses the reaction succinate + ATP + CoA = succinyl-CoA + ADP + phosphate. The catalysed reaction is GTP + succinate + CoA = succinyl-CoA + GDP + phosphate. Its pathway is carbohydrate metabolism; tricarboxylic acid cycle; succinate from succinyl-CoA (ligase route): step 1/1. In terms of biological role, succinyl-CoA synthetase functions in the citric acid cycle (TCA), coupling the hydrolysis of succinyl-CoA to the synthesis of either ATP or GTP and thus represents the only step of substrate-level phosphorylation in the TCA. The beta subunit provides nucleotide specificity of the enzyme and binds the substrate succinate, while the binding sites for coenzyme A and phosphate are found in the alpha subunit. This is Succinate--CoA ligase [ADP-forming] subunit beta from Acidobacterium capsulatum (strain ATCC 51196 / DSM 11244 / BCRC 80197 / JCM 7670 / NBRC 15755 / NCIMB 13165 / 161).